Here is a 270-residue protein sequence, read N- to C-terminus: Phosphatidylglycerol--prolipoprotein diacylglyceryl transferase (270 aa).

4 helical membrane-spanning segments follow: residues 19 to 39, 56 to 76, 92 to 112, and 116 to 136; these read FPVYWYGIIIGTGVLLGLWLA, LVLIAVPIAILFARMYYVIFE, QGGLAIHGGLIGAVVTGILFA, and GVSFWKLADIAAPSILLGQAI. Arg138 is an a 1,2-diacyl-sn-glycero-3-phospho-(1'-sn-glycerol) binding site. Transmembrane regions (helical) follow at residues 178 to 198, 206 to 226, and 236 to 256; these read HPTFLYESLWNFAGVILLLAL, GELFFTYLIWYSIGRFFVEGL, and LRIAQVMSIGLVVISIIFIIV.

The protein belongs to the Lgt family.

The protein resides in the cell membrane. The catalysed reaction is L-cysteinyl-[prolipoprotein] + a 1,2-diacyl-sn-glycero-3-phospho-(1'-sn-glycerol) = an S-1,2-diacyl-sn-glyceryl-L-cysteinyl-[prolipoprotein] + sn-glycerol 1-phosphate + H(+). It functions in the pathway protein modification; lipoprotein biosynthesis (diacylglyceryl transfer). Functionally, catalyzes the transfer of the diacylglyceryl group from phosphatidylglycerol to the sulfhydryl group of the N-terminal cysteine of a prolipoprotein, the first step in the formation of mature lipoproteins. This chain is Phosphatidylglycerol--prolipoprotein diacylglyceryl transferase, found in Bacillus anthracis (strain A0248).